The primary structure comprises 220 residues: dITP/XTP pyrophosphatase (220 aa).

13–18 (SHNAGK) is a substrate binding site. Mg(2+) is bound by residues Asp45 and Asp74. The active-site Proton acceptor is the Asp74. Substrate is bound by residues Ser75, 163–166 (FGYD), Lys186, and 199–200 (HR).

Belongs to the HAM1 NTPase family. Homodimer. Mg(2+) serves as cofactor.

It carries out the reaction XTP + H2O = XMP + diphosphate + H(+). The catalysed reaction is dITP + H2O = dIMP + diphosphate + H(+). It catalyses the reaction ITP + H2O = IMP + diphosphate + H(+). Its function is as follows. Pyrophosphatase that catalyzes the hydrolysis of nucleoside triphosphates to their monophosphate derivatives, with a high preference for the non-canonical purine nucleotides XTP (xanthosine triphosphate), dITP (deoxyinosine triphosphate) and ITP. Seems to function as a house-cleaning enzyme that removes non-canonical purine nucleotides from the nucleotide pool, thus preventing their incorporation into DNA/RNA and avoiding chromosomal lesions. The protein is dITP/XTP pyrophosphatase of Brucella melitensis biotype 1 (strain ATCC 23456 / CCUG 17765 / NCTC 10094 / 16M).